A 264-amino-acid chain; its full sequence is 3-methyl-2-oxobutanoate hydroxymethyltransferase (264 aa).

Mg(2+)-binding residues include aspartate 45 and aspartate 84. Residues 45 to 46 (DS), aspartate 84, and lysine 112 contribute to the 3-methyl-2-oxobutanoate site. A Mg(2+)-binding site is contributed by glutamate 114. Residue glutamate 181 is the Proton acceptor of the active site.

Belongs to the PanB family. In terms of assembly, homodecamer; pentamer of dimers. Mg(2+) is required as a cofactor.

The protein localises to the cytoplasm. It catalyses the reaction 3-methyl-2-oxobutanoate + (6R)-5,10-methylene-5,6,7,8-tetrahydrofolate + H2O = 2-dehydropantoate + (6S)-5,6,7,8-tetrahydrofolate. The protein operates within cofactor biosynthesis; (R)-pantothenate biosynthesis; (R)-pantoate from 3-methyl-2-oxobutanoate: step 1/2. In terms of biological role, catalyzes the reversible reaction in which hydroxymethyl group from 5,10-methylenetetrahydrofolate is transferred onto alpha-ketoisovalerate to form ketopantoate. In Escherichia coli (strain 55989 / EAEC), this protein is 3-methyl-2-oxobutanoate hydroxymethyltransferase.